A 932-amino-acid chain; its full sequence is Protein translocase subunit SecA (932 aa).

ATP is bound by residues glutamine 87, 105-109, and aspartate 515; that span reads GEGKT. Cysteine 916, cysteine 918, cysteine 927, and histidine 928 together coordinate Zn(2+).

It belongs to the SecA family. In terms of assembly, monomer and homodimer. Part of the essential Sec protein translocation apparatus which comprises SecA, SecYEG and auxiliary proteins SecDF-YajC and YidC. It depends on Zn(2+) as a cofactor.

The protein resides in the cell inner membrane. It localises to the cytoplasm. It catalyses the reaction ATP + H2O + cellular proteinSide 1 = ADP + phosphate + cellular proteinSide 2.. Its function is as follows. Part of the Sec protein translocase complex. Interacts with the SecYEG preprotein conducting channel. Has a central role in coupling the hydrolysis of ATP to the transfer of proteins into and across the cell membrane, serving both as a receptor for the preprotein-SecB complex and as an ATP-driven molecular motor driving the stepwise translocation of polypeptide chains across the membrane. The protein is Protein translocase subunit SecA of Burkholderia lata (strain ATCC 17760 / DSM 23089 / LMG 22485 / NCIMB 9086 / R18194 / 383).